Reading from the N-terminus, the 293-residue chain is uncharacterized protein (293 aa).

Positions 1-58 (MELKQLITFITAAEHVNFTLTAKMLNYAQSSVTSQIKSLEEEIGTPLFERLGKRLILT) constitute an HTH lysR-type domain. The H-T-H motif DNA-binding region spans 18 to 37 (FTLTAKMLNYAQSSVTSQIK).

Belongs to the LysR transcriptional regulatory family.

The protein resides in the cytoplasm. This is an uncharacterized protein from Bacillus subtilis (strain 168).